A 249-amino-acid chain; its full sequence is 2,3-bisphosphoglycerate-dependent phosphoglycerate mutase 2 (249 aa).

Substrate-binding positions include 8 to 15 (RHGESIWN), 21 to 22 (TG), arginine 60, 87 to 90 (ERHY), lysine 98, 114 to 115 (RR), and 183 to 184 (GN). Catalysis depends on histidine 9, which acts as the Tele-phosphohistidine intermediate. The active-site Proton donor/acceptor is the glutamate 87.

This sequence belongs to the phosphoglycerate mutase family. BPG-dependent PGAM subfamily. In terms of assembly, homodimer.

It carries out the reaction (2R)-2-phosphoglycerate = (2R)-3-phosphoglycerate. Its pathway is carbohydrate degradation; glycolysis; pyruvate from D-glyceraldehyde 3-phosphate: step 3/5. Its function is as follows. Catalyzes the interconversion of 2-phosphoglycerate and 3-phosphoglycerate. The protein is 2,3-bisphosphoglycerate-dependent phosphoglycerate mutase 2 of Nitrosomonas europaea (strain ATCC 19718 / CIP 103999 / KCTC 2705 / NBRC 14298).